An 89-amino-acid polypeptide reads, in one-letter code: Otospiralin (89 aa).

Positions 1–21 (MQPCVLWWLALGLLLGIPAGA) are cleaved as a signal peptide.

It belongs to the otospiralin family. Ear specific. Expressed in the cochlea and vestibule, but not in the cochlear nerve, cochlear nucleus, spinal chord, muscle, cerebral cortex, cerebellum, diencephalon and olfactory bulb. In the cochlea, expressed in fibrocytes of the spiral limbus, spiral ligament and suprastrial zone. In the vestibule, expressed in cells located to the stroma below the macular and crista sensory epithelia and in the subepithelial layer of the walls of semicircular canals and maculae.

Its subcellular location is the secreted. In terms of biological role, may be essential for the survival of the neurosensory epithelium of the inner ear. The chain is Otospiralin (Otos) from Rattus norvegicus (Rat).